The primary structure comprises 118 residues: Small ribosomal subunit protein uS13 (118 aa).

Positions 94-118 (SLPLRGQRTKTNARTRKGPRKPIRK) are disordered.

Belongs to the universal ribosomal protein uS13 family. Part of the 30S ribosomal subunit. Forms a loose heterodimer with protein S19. Forms two bridges to the 50S subunit in the 70S ribosome.

Located at the top of the head of the 30S subunit, it contacts several helices of the 16S rRNA. In the 70S ribosome it contacts the 23S rRNA (bridge B1a) and protein L5 of the 50S subunit (bridge B1b), connecting the 2 subunits; these bridges are implicated in subunit movement. Contacts the tRNAs in the A and P-sites. The protein is Small ribosomal subunit protein uS13 of Shewanella denitrificans (strain OS217 / ATCC BAA-1090 / DSM 15013).